The following is a 473-amino-acid chain: MNKCYLKYLLQSWTPRYSIRSNTRNFLQEILSFNEPQNLTESNWKRWLQCFNRYNLPLQMWYKISPQQWKSQVSKHWKDRNHFSKNSHRKNQSLLLYKQKEFYSIFASDSSSRYTREIERLNKRYRCNLFLYSYLDHTKSLNMRRFPVWRSEERETILNNRIKEIRNFHLFNNERNNENSINSLGKEKNLFFRSNLVLWLVPEFLGKKNIHKTEFIPVFYPSLVRERGEKTIQNRKSLRERERHESIRQWRWESKDLEERFKELGDMASVMTFIQNKKNIISLSVKMREDLDLFRLLFRRDIGLNRLTINSEHRLPRVLDDEILMCKIITTLLKFKSRFQERLDFNIFDESISRIRKFESERKTISKSFSLEEILLPKRCKELRILNSLYSKYDINEEAKFDEGSLGKNRGSNEKLVRINEEFNTNVNQSIKRFLWPSYRLEDLACMNRFWFNTSNGSRFSMLRIRLYLLIHD.

The protein belongs to the TIC214 family. Part of the Tic complex.

It localises to the plastid. It is found in the chloroplast. Functionally, involved in protein precursor import into chloroplasts. May be part of an intermediate translocation complex acting as a protein-conducting channel at the inner envelope. In Anthoceros angustus (Hornwort), this protein is Putative protein TIC 214 C-terminal part.